Reading from the N-terminus, the 169-residue chain is Caltractin (169 aa).

The interval 1–24 (MSYRKTVVSARRDQKKGRVGGLTE) is disordered. EF-hand domains lie at 25 to 60 (EQKQ…LGFE), 61 to 96 (PKKE…KMGE), 98 to 133 (DSRE…LGEN), and 134 to 169 (LTDE…TSLF). Ca(2+) contacts are provided by Asp-38, Asp-40, Ser-42, Thr-44, and Glu-49. Ca(2+) contacts are provided by Asp-147, Asn-149, Asp-151, Gln-153, and Glu-158.

The protein belongs to the centrin family.

Functionally, this calcium-binding protein is found in the basal body complexes (the functional homolog of the centrosome in animal cell). In mitotic cells it is specifically associated with the poles of the mitotic spindles at the sites of the duplicated basal body complexes. The chain is Caltractin from Dunaliella salina (Green alga).